A 779-amino-acid chain; its full sequence is Kazrin (779 aa).

Residues 79–261 (AQVLLREEVV…LATLTKDVPK (183 aa)) are a coiled coil. The segment at 295–366 (QQTLYHSHPP…PGPVQKSLHN (72 aa)) is disordered. Phosphoserine occurs at positions 356, 371, and 391. The tract at residues 403–429 (KSLDPGLFDDSDSQCSPTRHSLSLSEG) is disordered. A compositionally biased stretch (polar residues) spans 415-426 (SQCSPTRHSLSL). 3 consecutive SAM domains span residues 450 to 515 (WKAG…YRDA), 528 to 592 (DHHW…LYQV), and 616 to 683 (WTNQ…STIF). A disordered region spans residues 685 to 779 (PSNSTGIRES…GYGSLEVTNV (95 aa)). The span at 736–746 (SSKEPDFHDDY) shows a compositional bias: basic and acidic residues.

This sequence belongs to the kazrin family. As to expression, expressed in skin interfollicular epidermis and hair follicles. Expressed in tongue epithelium basal suprabasal layers.

Its subcellular location is the cell junction. It is found in the nucleus. The protein resides in the cytoplasm. It localises to the cytoskeleton. In terms of biological role, component of the cornified envelope of keratinocytes. May be involved in the interplay between adherens junctions and desmosomes. The function in the nucleus is not known. The polypeptide is Kazrin (Kazn) (Mus musculus (Mouse)).